Here is an 89-residue protein sequence, read N- to C-terminus: UPF0250 protein CV_3095 (89 aa).

The protein belongs to the UPF0250 family.

This chain is UPF0250 protein CV_3095, found in Chromobacterium violaceum (strain ATCC 12472 / DSM 30191 / JCM 1249 / CCUG 213 / NBRC 12614 / NCIMB 9131 / NCTC 9757 / MK).